Consider the following 405-residue polypeptide: Replication factor C large subunit (405 aa).

47-54 (GPPGVGKT) contributes to the ATP binding site.

It belongs to the activator 1 small subunits family. RfcL subfamily. As to quaternary structure, heteromultimer composed of small subunits (RfcS) and large subunits (RfcL).

Functionally, part of the RFC clamp loader complex which loads the PCNA sliding clamp onto DNA. This is Replication factor C large subunit from Saccharolobus islandicus (strain Y.N.15.51 / Yellowstone #2) (Sulfolobus islandicus).